A 52-amino-acid polypeptide reads, in one-letter code: Metallothionein-2 (52 aa).

Repeats lie at residues 43-47 (QTCKC) and 48-52 (QTCKC).

It belongs to the metallothionein superfamily. Type 10 family.

Its function is as follows. The metallothioneins are involved in the cellular sequestration of toxic metal ions. The protein is Metallothionein-2 (MT-II) of Candida glabrata (strain ATCC 2001 / BCRC 20586 / JCM 3761 / NBRC 0622 / NRRL Y-65 / CBS 138) (Yeast).